The primary structure comprises 421 residues: Medium-chain specific acyl-CoA dehydrogenase, mitochondrial (421 aa).

The N-terminal 25 residues, 1–25 (MIALFRRSCGVLRSLSHFDWRSQHT), are a transit peptide targeting the mitochondrion. Lys-69 is subject to N6-acetyllysine; alternate. N6-succinyllysine; alternate is present on Lys-69. Lys-79 carries the post-translational modification N6-acetyllysine. 158-167 (YCVTEPVAGS) serves as a coordination point for FAD. Ser-167 provides a ligand contact to octanoyl-CoA. Position 179 is an N6-succinyllysine (Lys-179). 191 to 193 (WIT) is an FAD binding site. An N6-acetyllysine; alternate modification is found at Lys-212. Residue Lys-212 is modified to N6-succinyllysine; alternate. Ser-216 provides a ligand contact to octanoyl-CoA. Residues Lys-217, Lys-259, and Lys-271 each carry the N6-acetyllysine; alternate modification. An N6-succinyllysine; alternate mark is found at Lys-217, Lys-259, and Lys-271. Asp-278 serves as a coordination point for octanoyl-CoA. Position 279 is an N6-acetyllysine (Lys-279). Position 281 (Arg-281) interacts with octanoyl-CoA. Position 301 is an N6-acetyllysine (Lys-301). FAD contacts are provided by residues 306–308 (RKT) and 316–317 (HQ). Arg-349 and Thr-351 together coordinate octanoyl-CoA. Phosphothreonine is present on Thr-351. 374–378 (QIFGG) is a binding site for FAD. Octanoyl-CoA is bound at residue Glu-401. The Proton acceptor role is filled by Glu-401. Residue 402 to 405 (GTAQ) coordinates FAD.

This sequence belongs to the acyl-CoA dehydrogenase family. In terms of assembly, homotetramer. Interacts with the heterodimeric electron transfer flavoprotein ETF. Requires FAD as cofactor. In terms of processing, acetylated. Could occur at proximity of the cofactor-binding sites and reduce the catalytic activity. Could be deacetylated by SIRT3.

Its subcellular location is the mitochondrion matrix. It carries out the reaction a medium-chain 2,3-saturated fatty acyl-CoA + oxidized [electron-transfer flavoprotein] + H(+) = a medium-chain (2E)-enoyl-CoA + reduced [electron-transfer flavoprotein]. The catalysed reaction is pentanoyl-CoA + oxidized [electron-transfer flavoprotein] + H(+) = (2E)-pentenoyl-CoA + reduced [electron-transfer flavoprotein]. It catalyses the reaction hexanoyl-CoA + oxidized [electron-transfer flavoprotein] + H(+) = (2E)-hexenoyl-CoA + reduced [electron-transfer flavoprotein]. The enzyme catalyses octanoyl-CoA + oxidized [electron-transfer flavoprotein] + H(+) = (2E)-octenoyl-CoA + reduced [electron-transfer flavoprotein]. It carries out the reaction decanoyl-CoA + oxidized [electron-transfer flavoprotein] + H(+) = (2E)-decenoyl-CoA + reduced [electron-transfer flavoprotein]. The catalysed reaction is dodecanoyl-CoA + oxidized [electron-transfer flavoprotein] + H(+) = (2E)-dodecenoyl-CoA + reduced [electron-transfer flavoprotein]. It catalyses the reaction tetradecanoyl-CoA + oxidized [electron-transfer flavoprotein] + H(+) = (2E)-tetradecenoyl-CoA + reduced [electron-transfer flavoprotein]. The enzyme catalyses oxidized [electron-transfer flavoprotein] + hexadecanoyl-CoA + H(+) = (2E)-hexadecenoyl-CoA + reduced [electron-transfer flavoprotein]. Its pathway is lipid metabolism; mitochondrial fatty acid beta-oxidation. In terms of biological role, medium-chain specific acyl-CoA dehydrogenase is one of the acyl-CoA dehydrogenases that catalyze the first step of mitochondrial fatty acid beta-oxidation, an aerobic process breaking down fatty acids into acetyl-CoA and allowing the production of energy from fats. The first step of fatty acid beta-oxidation consists in the removal of one hydrogen from C-2 and C-3 of the straight-chain fatty acyl-CoA thioester, resulting in the formation of trans-2-enoyl-CoA. Electron transfer flavoprotein (ETF) is the electron acceptor that transfers electrons to the main mitochondrial respiratory chain via ETF-ubiquinone oxidoreductase (ETF dehydrogenase). Among the different mitochondrial acyl-CoA dehydrogenases, medium-chain specific acyl-CoA dehydrogenase acts specifically on acyl-CoAs with saturated 6 to 12 carbons long primary chains. The sequence is that of Medium-chain specific acyl-CoA dehydrogenase, mitochondrial from Bos taurus (Bovine).